Consider the following 202-residue polypeptide: Translation initiation factor IF-3 (202 aa).

The segment at 178-202 (TPRKTPLLKKESETTEPKKALRSIN) is disordered. Residues 185–196 (LKKESETTEPKK) show a composition bias toward basic and acidic residues.

This sequence belongs to the IF-3 family. In terms of assembly, monomer.

It localises to the cytoplasm. IF-3 binds to the 30S ribosomal subunit and shifts the equilibrium between 70S ribosomes and their 50S and 30S subunits in favor of the free subunits, thus enhancing the availability of 30S subunits on which protein synthesis initiation begins. The sequence is that of Translation initiation factor IF-3 from Prochlorococcus marinus (strain NATL1A).